A 254-amino-acid polypeptide reads, in one-letter code: Guanylate kinase (254 aa).

In terms of domain architecture, Guanylate kinase-like spans 64–243 (KHLVVLAGPT…AAREVVDLMM (180 aa)). ATP is bound at residue 71–78 (GPTAVGKG).

The protein belongs to the guanylate kinase family.

The protein localises to the cytoplasm. The enzyme catalyses GMP + ATP = GDP + ADP. Its function is as follows. Essential for recycling GMP and indirectly, cGMP. This Leifsonia xyli subsp. xyli (strain CTCB07) protein is Guanylate kinase.